We begin with the raw amino-acid sequence, 789 residues long: Disintegrin and metalloproteinase domain-containing protein 1 (789 aa).

The signal sequence occupies residues 1-68 (MSVAASASRS…LLIFLPSTLC (68 aa)). Residues 238–432 (KYVEMFVVVN…HRGACLLDRP (195 aa)) enclose the Peptidase M12B domain. Asparagine 259 carries N-linked (GlcNAc...) asparagine glycosylation. 4 cysteine pairs are disulfide-bonded: cysteine 348-cysteine 427, cysteine 388-cysteine 411, cysteine 390-cysteine 396, and cysteine 497-cysteine 517. Residue histidine 373 coordinates Zn(2+). The active site involves glutamate 374. Positions 377 and 383 each coordinate Zn(2+). N-linked (GlcNAc...) asparagine glycosylation is present at asparagine 410. Residues 441-525 (DAHCGNGVVE…ECPANSYMQD (85 aa)) form the Disintegrin domain. Asparagine 633 is a glycosylation site (N-linked (GlcNAc...) asparagine). Residues 666 to 700 (LQYDCHPQEMCHGNGVCNNFKHCHCDAGFSPPDCS) form the EGF-like domain. 3 disulfides stabilise this stretch: cysteine 670–cysteine 682, cysteine 676–cysteine 688, and cysteine 690–cysteine 699. An N-linked (GlcNAc...) asparagine glycan is attached at asparagine 720. A helical transmembrane segment spans residues 743–763 (VVVLVVPIFLIVLLCCLMLIA). Residues 764–789 (YLWSEVQEAVSPGSSSTTSSSESESD) are Cytoplasmic-facing.

In terms of assembly, heterodimer with ADAM2/fertilin subunit beta.

The protein resides in the membrane. Functionally, may be involved in sperm-egg fusion. The polypeptide is Disintegrin and metalloproteinase domain-containing protein 1 (Adam1) (Rattus norvegicus (Rat)).